We begin with the raw amino-acid sequence, 466 residues long: 3-isopropylmalate dehydratase large subunit (466 aa).

Positions 347, 407, and 410 each coordinate [4Fe-4S] cluster.

This sequence belongs to the aconitase/IPM isomerase family. LeuC type 1 subfamily. In terms of assembly, heterodimer of LeuC and LeuD. Requires [4Fe-4S] cluster as cofactor.

The enzyme catalyses (2R,3S)-3-isopropylmalate = (2S)-2-isopropylmalate. It functions in the pathway amino-acid biosynthesis; L-leucine biosynthesis; L-leucine from 3-methyl-2-oxobutanoate: step 2/4. Functionally, catalyzes the isomerization between 2-isopropylmalate and 3-isopropylmalate, via the formation of 2-isopropylmaleate. The polypeptide is 3-isopropylmalate dehydratase large subunit (Vibrio vulnificus (strain YJ016)).